A 248-amino-acid polypeptide reads, in one-letter code: 2,3-bisphosphoglycerate-dependent phosphoglycerate mutase (248 aa).

Residues 8 to 15 (RHGESGWN) and Arg-58 each bind substrate. Residue His-9 is the Tele-phosphohistidine intermediate of the active site. The tract at residues 82–101 (GTGEDRTEREDGSRKDRKEK) is disordered. The active-site Proton donor/acceptor is the Glu-124. Substrate contacts are provided by residues 124 to 127 (ERYY) and Lys-135.

Belongs to the phosphoglycerate mutase family. BPG-dependent PGAM subfamily.

It carries out the reaction (2R)-2-phosphoglycerate = (2R)-3-phosphoglycerate. Its pathway is carbohydrate degradation; glycolysis; pyruvate from D-glyceraldehyde 3-phosphate: step 3/5. Its function is as follows. Catalyzes the interconversion of 2-phosphoglycerate and 3-phosphoglycerate. This Methanosarcina acetivorans (strain ATCC 35395 / DSM 2834 / JCM 12185 / C2A) protein is 2,3-bisphosphoglycerate-dependent phosphoglycerate mutase.